Here is a 414-residue protein sequence, read N- to C-terminus: Serine--tRNA ligase (414 aa).

230–232 is an L-serine binding site; that stretch reads TAE. Residue 261-263 coordinates ATP; the sequence is RKE. An L-serine-binding site is contributed by Glu284. 348-351 provides a ligand contact to ATP; sequence EISS. Ser382 lines the L-serine pocket.

Belongs to the class-II aminoacyl-tRNA synthetase family. Type-1 seryl-tRNA synthetase subfamily. In terms of assembly, homodimer. The tRNA molecule binds across the dimer.

The protein resides in the cytoplasm. It catalyses the reaction tRNA(Ser) + L-serine + ATP = L-seryl-tRNA(Ser) + AMP + diphosphate + H(+). The catalysed reaction is tRNA(Sec) + L-serine + ATP = L-seryl-tRNA(Sec) + AMP + diphosphate + H(+). The protein operates within aminoacyl-tRNA biosynthesis; selenocysteinyl-tRNA(Sec) biosynthesis; L-seryl-tRNA(Sec) from L-serine and tRNA(Sec): step 1/1. Functionally, catalyzes the attachment of serine to tRNA(Ser). Is also able to aminoacylate tRNA(Sec) with serine, to form the misacylated tRNA L-seryl-tRNA(Sec), which will be further converted into selenocysteinyl-tRNA(Sec). The polypeptide is Serine--tRNA ligase (Sulfurovum sp. (strain NBC37-1)).